A 448-amino-acid polypeptide reads, in one-letter code: Na(+)-translocating NADH-quinone reductase subunit A (448 aa).

It belongs to the NqrA family. In terms of assembly, composed of six subunits; NqrA, NqrB, NqrC, NqrD, NqrE and NqrF.

The catalysed reaction is a ubiquinone + n Na(+)(in) + NADH + H(+) = a ubiquinol + n Na(+)(out) + NAD(+). Its function is as follows. NQR complex catalyzes the reduction of ubiquinone-1 to ubiquinol by two successive reactions, coupled with the transport of Na(+) ions from the cytoplasm to the periplasm. NqrA to NqrE are probably involved in the second step, the conversion of ubisemiquinone to ubiquinol. The sequence is that of Na(+)-translocating NADH-quinone reductase subunit A from Glaesserella parasuis serovar 5 (strain SH0165) (Haemophilus parasuis).